The sequence spans 243 residues: Phosphoadenosine 5'-phosphosulfate reductase (243 aa).

Catalysis depends on C239, which acts as the Nucleophile; cysteine thiosulfonate intermediate.

The protein belongs to the PAPS reductase family. CysH subfamily.

It localises to the cytoplasm. The enzyme catalyses [thioredoxin]-disulfide + sulfite + adenosine 3',5'-bisphosphate + 2 H(+) = [thioredoxin]-dithiol + 3'-phosphoadenylyl sulfate. It participates in sulfur metabolism; hydrogen sulfide biosynthesis; sulfite from sulfate: step 3/3. Its function is as follows. Catalyzes the formation of sulfite from phosphoadenosine 5'-phosphosulfate (PAPS) using thioredoxin as an electron donor. The protein is Phosphoadenosine 5'-phosphosulfate reductase of Erwinia tasmaniensis (strain DSM 17950 / CFBP 7177 / CIP 109463 / NCPPB 4357 / Et1/99).